The chain runs to 226 residues: Late protein I226R (226 aa).

A signal peptide spans 1–16 (MKMETFLVCLFHNADG). 2 N-linked (GlcNAc...) asparagine; by host glycosylation sites follow: Asn142 and Asn164.

Belongs to the asfivirus I226R family.

Its function is as follows. Plays a role in the inhibition of host NF-kappa-B and IRF3 signaling pathways. Mechanistically, promotes the degradation of host IKBKG through enhancing its ubiquitination leading to inhibition of both pathways. This chain is Late protein I226R, found in Ornithodoros (relapsing fever ticks).